Consider the following 219-residue polypeptide: Small ribosomal subunit protein uS5 (219 aa).

The interval methionine 1–alanine 32 is disordered. The region spanning leucine 68–isoleucine 131 is the S5 DRBM domain.

This sequence belongs to the universal ribosomal protein uS5 family. In terms of assembly, part of the 30S ribosomal subunit. Contacts protein S4.

In terms of biological role, with S4 and S12 plays an important role in translational accuracy. This chain is Small ribosomal subunit protein uS5 (rps5), found in Cenarchaeum symbiosum (strain A).